A 90-amino-acid chain; its full sequence is UPF0367 protein PMT9312_0127 (90 aa).

Belongs to the UPF0367 family.

The chain is UPF0367 protein PMT9312_0127 from Prochlorococcus marinus (strain MIT 9312).